A 178-amino-acid chain; its full sequence is MNQSLFHHSKQQEYCPQCGAPLQIKQGKKGLFLGCSAYPECDYLRPLQRSEHKVLKTLDEICPKCGNLLQLKQGSFGMFIGCSHYPECDFVVREESESEEKITCPECKTGHLISRRGRQGKIFYGCDNFPKCKFSLPAKPYSVPCPTCHFPLSLLKSEDGEKQIFQCANKTCRHIFEQ.

The protein to E.coli YrdD.

This is an uncharacterized protein from Haemophilus influenzae (strain ATCC 51907 / DSM 11121 / KW20 / Rd).